The chain runs to 198 residues: V-type proton ATPase subunit E (198 aa).

It belongs to the V-ATPase E subunit family.

Its function is as follows. Produces ATP from ADP in the presence of a proton gradient across the membrane. The polypeptide is V-type proton ATPase subunit E (Borrelia turicatae (strain 91E135)).